A 221-amino-acid chain; its full sequence is Histone H1C (221 aa).

Composition is skewed to low complexity over residues 1-11 (MTETAATETTP) and 27-44 (KKAA…PSAS). Disordered regions lie at residues 1–44 (MTET…PSAS) and 123–221 (AKKK…AAKK). Residues 39 to 112 (SGPSASELIV…GASGSFKLNK (74 aa)) enclose the H15 domain. Composition is skewed to basic residues over residues 123 to 150 (AKKK…KPKK) and 158 to 221 (SPKK…AAKK).

This sequence belongs to the histone H1/H5 family.

The protein localises to the nucleus. Its subcellular location is the chromosome. Histones H1 are necessary for the condensation of nucleosome chains into higher-order structures. The polypeptide is Histone H1C (Xenopus laevis (African clawed frog)).